We begin with the raw amino-acid sequence, 427 residues long: Glutamate-1-semialdehyde 2,1-aminomutase (427 aa).

Lys-265 carries the N6-(pyridoxal phosphate)lysine modification.

This sequence belongs to the class-III pyridoxal-phosphate-dependent aminotransferase family. HemL subfamily. Homodimer. Requires pyridoxal 5'-phosphate as cofactor.

It localises to the cytoplasm. The catalysed reaction is (S)-4-amino-5-oxopentanoate = 5-aminolevulinate. The protein operates within porphyrin-containing compound metabolism; protoporphyrin-IX biosynthesis; 5-aminolevulinate from L-glutamyl-tRNA(Glu): step 2/2. The protein is Glutamate-1-semialdehyde 2,1-aminomutase of Neisseria meningitidis serogroup C / serotype 2a (strain ATCC 700532 / DSM 15464 / FAM18).